A 335-amino-acid polypeptide reads, in one-letter code: Dolichyl-diphosphooligosaccharide--protein glycosyltransferase subunit MAGT1 (335 aa).

A signal peptide spans 1–29 (MASPRWLWCVCATAAVTLLLVSKVPSASA). Residues 30-184 (QRKKEKVLVE…DVNIRVIRPP (155 aa)) are Extracellular-facing. One can recognise a Thioredoxin domain in the interval 47–175 (WTNQRPVIRM…IARWIADRTD (129 aa)). Residue N71 is glycosylated (N-linked (GlcNAc...) asparagine). C87 and C90 are disulfide-bonded. A helical membrane pass occupies residues 185 to 205 (NYAGPLMLGLLLAVIGGLVYL). The Cytoplasmic portion of the chain corresponds to 206–209 (RRSN). The chain crosses the membrane as a helical span at residues 210–230 (MEFLFNKTGWAFAALCFVLAM). Topologically, residues 231–270 (TSGQMWNHIRGPPYAHKNPHTGHVNYIHGSSQAQFVAETH) are extracellular. A helical transmembrane segment spans residues 271–291 (IVLLFNGGVTLGMVLLCEAAA). Topologically, residues 292–300 (SDMDIGKRR) are cytoplasmic. Residues 301–321 (MMCIAGIGLVVLFFSWMLSIF) traverse the membrane as a helical segment. Topologically, residues 322-335 (RSKYHGYPYSFLMS) are extracellular.

This sequence belongs to the OST3/OST6 family. As to quaternary structure, accessory component of the STT3B-containing form of the oligosaccharyltransferase (OST) complex. OST exists in two different complex forms which contain common core subunits RPN1, RPN2, OST48, OST4, DAD1 and TMEM258, either STT3A or STT3B as catalytic subunits, and form-specific accessory subunits. OST can form stable complexes with the Sec61 complex or with both the Sec61 and TRAP complexes. The association of TUSC3 or MAGT1 with the STT3B-containing complex seems to be mutually exclusvice.

Its subcellular location is the cell membrane. It localises to the endoplasmic reticulum. The protein localises to the endoplasmic reticulum membrane. Its pathway is protein modification; protein glycosylation. Its function is as follows. Accessory component of the STT3B-containing form of the N-oligosaccharyl transferase (OST) complex which catalyzes the transfer of a high mannose oligosaccharide from a lipid-linked oligosaccharide donor to an asparagine residue within an Asn-X-Ser/Thr consensus motif in nascent polypeptide chains. Involved in N-glycosylation of STT3B-dependent substrates. Specifically required for the glycosylation of a subset of acceptor sites that are near cysteine residues; in this function seems to act redundantly with TUSC3. In its oxidized form proposed to form transient mixed disulfides with a glycoprotein substrate to facilitate access of STT3B to the unmodified acceptor site. Also has oxidoreductase-independent functions in the STT3B-containing OST complex possibly involving substrate recognition. Could indirectly play a role in Mg(2+) transport in epithelial cells. This chain is Dolichyl-diphosphooligosaccharide--protein glycosyltransferase subunit MAGT1, found in Rattus norvegicus (Rat).